A 619-amino-acid chain; its full sequence is 1-deoxy-D-xylulose-5-phosphate synthase (619 aa).

Thiamine diphosphate contacts are provided by residues His-74 and Gly-115 to Ser-117. Asp-146 lines the Mg(2+) pocket. Residues Gly-147–Ala-148, Asn-175, Tyr-285, and Glu-365 each bind thiamine diphosphate. Mg(2+) is bound at residue Asn-175.

This sequence belongs to the transketolase family. DXPS subfamily. In terms of assembly, homodimer. It depends on Mg(2+) as a cofactor. Thiamine diphosphate serves as cofactor.

The catalysed reaction is D-glyceraldehyde 3-phosphate + pyruvate + H(+) = 1-deoxy-D-xylulose 5-phosphate + CO2. Its pathway is metabolic intermediate biosynthesis; 1-deoxy-D-xylulose 5-phosphate biosynthesis; 1-deoxy-D-xylulose 5-phosphate from D-glyceraldehyde 3-phosphate and pyruvate: step 1/1. Functionally, catalyzes the acyloin condensation reaction between C atoms 2 and 3 of pyruvate and glyceraldehyde 3-phosphate to yield 1-deoxy-D-xylulose-5-phosphate (DXP). This chain is 1-deoxy-D-xylulose-5-phosphate synthase, found in Clostridium perfringens (strain ATCC 13124 / DSM 756 / JCM 1290 / NCIMB 6125 / NCTC 8237 / Type A).